The following is a 364-amino-acid chain: G-protein coupled receptor 4 (364 aa).

The Extracellular portion of the chain corresponds to 1–8 (MCNVSQDS). N3 carries N-linked (GlcNAc...) asparagine glycosylation. Residues 9–45 (CNIDSRLDSLFPPTLYIFVMVIGFPTNCLSLWAAFVQ) traverse the membrane as a helical segment. Intrachain disulfides connect C9/C258 and C90/C168. Residues 46-49 (VRQK) lie on the Cytoplasmic side of the membrane. Residues 50–80 (NELGVYLLNLSISDLLYIATLPPWVNYFLHQ) traverse the membrane as a helical segment. Residues 81–85 (DNWIH) are Extracellular-facing. The helical transmembrane segment at 86-121 (GPESCKLFGFILYTNIYISIGFLSCISVDRYLAVAH) threads the bilayer. Over 122–129 (PLKFAKVR) the chain is Cytoplasmic. A helical membrane pass occupies residues 130–156 (RVKTAAVVSAVVWAIEIGANSAPLFHN). The Extracellular portion of the chain corresponds to 157 to 172 (ELFEDRFNHTFCFEKY). The tract at residues 157-172 (ELFEDRFNHTFCFEKY) is extracellular loop 2 (ECL2). N-linked (GlcNAc...) asparagine glycosylation is present at N164. A helical transmembrane segment spans residues 173 to 210 (PMEDWVAQMNLYRVFVGFLFPWVLMLFCYQGILRAVKT). At 211-214 (NVST) the chain is on the cytoplasmic side. A helical transmembrane segment spans residues 215-250 (EREEKAKIKRLALSLIAILLFCFAPYHLILLSRSVV). Residues 251–260 (YLGQPCDCTF) lie on the Extracellular side of the membrane. A helical membrane pass occupies residues 261-289 (EENIFTAYHVSLALTSLNCVADPILYCLA). The Cytoplasmic segment spans residues 290 to 364 (NEGARSEVTR…RVRRRRDCKC (75 aa)).

This sequence belongs to the G-protein coupled receptor 1 family.

The protein localises to the cell membrane. With respect to regulation, activated by a network of residues that connects an extracellular-facing cavity to Glu-145, a conserved charged residue buried in the transmembrane core of the receptor. Protonation likely drives conformational changes in extracellular loop 2 (ECL2), which stabilizes movement of transmembrane 3 (TM3) and a series of rearrangements that connect the extracellular-facing cavity to Glu-145, a residue only conserved in proton-sensing G-protein coupled receptors. Functionally, proton-sensing G-protein coupled receptor activated by extracellular pH, which is required to monitor pH changes and generate adaptive reactions. Ligand binding causes a conformation change that triggers signaling via guanine nucleotide-binding proteins (G proteins) and modulates the activity of downstream effectors, such as adenylate cyclase. This chain is G-protein coupled receptor 4, found in Callorhinchus milii (Ghost shark).